The primary structure comprises 171 residues: Large ribosomal subunit protein uL10 (171 aa).

It belongs to the universal ribosomal protein uL10 family. Part of the ribosomal stalk of the 50S ribosomal subunit. The N-terminus interacts with L11 and the large rRNA to form the base of the stalk. The C-terminus forms an elongated spine to which L12 dimers bind in a sequential fashion forming a multimeric L10(L12)X complex.

Functionally, forms part of the ribosomal stalk, playing a central role in the interaction of the ribosome with GTP-bound translation factors. The chain is Large ribosomal subunit protein uL10 from Paramagnetospirillum magneticum (strain ATCC 700264 / AMB-1) (Magnetospirillum magneticum).